Reading from the N-terminus, the 223-residue chain is Urease accessory protein UreG (223 aa).

The tract at residues 1-31 (MAKHSHDHTHDHHDRPRRVRKPGEPLRIGVG) is disordered. 32–39 (GPVGSGKT) contacts GTP.

Belongs to the SIMIBI class G3E GTPase family. UreG subfamily. In terms of assembly, homodimer. UreD, UreF and UreG form a complex that acts as a GTP-hydrolysis-dependent molecular chaperone, activating the urease apoprotein by helping to assemble the nickel containing metallocenter of UreC. The UreE protein probably delivers the nickel.

The protein resides in the cytoplasm. Its function is as follows. Facilitates the functional incorporation of the urease nickel metallocenter. This process requires GTP hydrolysis, probably effectuated by UreG. The protein is Urease accessory protein UreG of Mycobacterium marinum (strain ATCC BAA-535 / M).